Reading from the N-terminus, the 264-residue chain is Synaptophysin-like protein 2 (264 aa).

Residues M1–E33 are Cytoplasmic-facing. The MARVEL domain maps to R30 to P238. The helical transmembrane segment at P34–G54 threads the bilayer. At S55–E116 the chain is on the vesicular side. The helical transmembrane segment at F117–L137 threads the bilayer. Residues R138–P150 lie on the Cytoplasmic side of the membrane. Residues L151–W171 form a helical membrane-spanning segment. The Vesicular portion of the chain corresponds to G172–N213. N-linked (GlcNAc...) asparagine glycosylation occurs at N213. A helical membrane pass occupies residues L214–F234. The Cytoplasmic segment spans residues K235–Q264. Residues Q242–Q264 form a disordered region.

The protein belongs to the synaptophysin/synaptobrevin family. Expressed abundantly in skeletal muscle and at lower levels in the kidney.

It localises to the membrane. Its function is as follows. Involved in communication between the T-tubular and junctional sarcoplasmic reticulum (SR) membranes. This chain is Synaptophysin-like protein 2 (Sypl2), found in Mus musculus (Mouse).